A 255-amino-acid chain; its full sequence is Zinc-finger homeodomain protein 6 (255 aa).

Positions 1–35 are disordered; that stretch reads MEFRGHDEPVDEMGVAYGRTPPSSSSSPAASASAG. A compositionally biased stretch (low complexity) spans 21–35; that stretch reads PPSSSSSPAASASAG. The ZF-HD dimerization-type; degenerate zinc-finger motif lies at 45 to 93; it reads YHECLRNHAAAMGGHVVDGCREFMPMPGDAADALKCAACGCHRSFHRKD. Residues 106–126 show a composition bias toward pro residues; it reads PSPPTPRVPLLMPPPQPQPHP. Disordered regions lie at residues 106-181 and 226-255; these read PSPP…KFTP and NNKS…QQQQ. A compositionally biased stretch (low complexity) spans 139 to 153; it reads YHHTPSGSGGTTTES. A DNA-binding region (homeobox) is located at residues 172-235; sequence RKRFRTKFTP…NNKSSIGSSS (64 aa). Over residues 240–255 the composition is skewed to low complexity; that stretch reads RRQPQEQQSQQQQQQQ.

As to quaternary structure, homo- and heterodimer with other ZFHD proteins.

The protein localises to the nucleus. In terms of biological role, putative transcription factor. The polypeptide is Zinc-finger homeodomain protein 6 (ZHD6) (Oryza sativa subsp. japonica (Rice)).